The following is a 298-amino-acid chain: MTKQTEYKRKPEWLKIKLNTNENYTGLKKMMRSKNLHTVCEEAKCPNIHECWAVRKTATFMILGAVCTRACRFCAVKTGLPTELDLQEPERVADSVVQMGLKHVVITAVARDDLKDGGAAVFAETVRAVRRKNPFTSIEVLPSDMGGVEENLKMLMDAKPDILNHNIETVRRLSDRVRARAKYDRSLEFLRRAKEMQPDIPTKSSIMVGLGETREDLIEAMDDLRANNVDILTLGQYLQPSKKHLPVLKYYPPAEFAELKEIALSKGFSHCEAGPLVRSSYHADEQVRSAKEKTAEAK.

[4Fe-4S] cluster-binding residues include Cys40, Cys45, Cys51, Cys67, Cys71, Cys74, and Ser280. A Radical SAM core domain is found at 53 to 269 (AVRKTATFMI…KEIALSKGFS (217 aa)).

This sequence belongs to the radical SAM superfamily. Lipoyl synthase family. Requires [4Fe-4S] cluster as cofactor.

It is found in the cytoplasm. The catalysed reaction is [[Fe-S] cluster scaffold protein carrying a second [4Fe-4S](2+) cluster] + N(6)-octanoyl-L-lysyl-[protein] + 2 oxidized [2Fe-2S]-[ferredoxin] + 2 S-adenosyl-L-methionine + 4 H(+) = [[Fe-S] cluster scaffold protein] + N(6)-[(R)-dihydrolipoyl]-L-lysyl-[protein] + 4 Fe(3+) + 2 hydrogen sulfide + 2 5'-deoxyadenosine + 2 L-methionine + 2 reduced [2Fe-2S]-[ferredoxin]. Its pathway is protein modification; protein lipoylation via endogenous pathway; protein N(6)-(lipoyl)lysine from octanoyl-[acyl-carrier-protein]. In terms of biological role, catalyzes the radical-mediated insertion of two sulfur atoms into the C-6 and C-8 positions of the octanoyl moiety bound to the lipoyl domains of lipoate-dependent enzymes, thereby converting the octanoylated domains into lipoylated derivatives. The protein is Lipoyl synthase of Bacillus thuringiensis (strain Al Hakam).